A 224-amino-acid polypeptide reads, in one-letter code: Phosphoribosylformylglycinamidine synthase subunit PurQ (224 aa).

The Glutamine amidotransferase type-1 domain maps to 2 to 224; that stretch reads TVAVVRFGGS…DGQGILGAFA (223 aa). The active-site Nucleophile is cysteine 85. Active-site residues include histidine 202 and glutamate 204.

Part of the FGAM synthase complex composed of 1 PurL, 1 PurQ and 2 PurS subunits.

Its subcellular location is the cytoplasm. The catalysed reaction is N(2)-formyl-N(1)-(5-phospho-beta-D-ribosyl)glycinamide + L-glutamine + ATP + H2O = 2-formamido-N(1)-(5-O-phospho-beta-D-ribosyl)acetamidine + L-glutamate + ADP + phosphate + H(+). It carries out the reaction L-glutamine + H2O = L-glutamate + NH4(+). It participates in purine metabolism; IMP biosynthesis via de novo pathway; 5-amino-1-(5-phospho-D-ribosyl)imidazole from N(2)-formyl-N(1)-(5-phospho-D-ribosyl)glycinamide: step 1/2. Part of the phosphoribosylformylglycinamidine synthase complex involved in the purines biosynthetic pathway. Catalyzes the ATP-dependent conversion of formylglycinamide ribonucleotide (FGAR) and glutamine to yield formylglycinamidine ribonucleotide (FGAM) and glutamate. The FGAM synthase complex is composed of three subunits. PurQ produces an ammonia molecule by converting glutamine to glutamate. PurL transfers the ammonia molecule to FGAR to form FGAM in an ATP-dependent manner. PurS interacts with PurQ and PurL and is thought to assist in the transfer of the ammonia molecule from PurQ to PurL. In Halobacterium salinarum (strain ATCC 700922 / JCM 11081 / NRC-1) (Halobacterium halobium), this protein is Phosphoribosylformylglycinamidine synthase subunit PurQ.